A 551-amino-acid chain; its full sequence is TRAF3-interacting JNK-activating modulator (551 aa).

Topologically, residues 1–526 are cytoplasmic; it reads MISPDPRPSP…QLPPRRQCGR (526 aa). Disordered stretches follow at residues 73-95 and 140-178; these read LEEK…RPGQ and DHLS…IKND. 2 coiled-coil regions span residues 240-436 and 464-506; these read DKLK…LLTK and WDLR…RKLQ. Residues 527 to 544 form a helical; Anchor for type IV membrane protein membrane-spanning segment; the sequence is WLPVLMVVIAAALAVFLA. Residues 545–551 are Extracellular-facing; the sequence is NKDNLMI.

Interacts (via its coiled-coil domain) with TRAF3 (via isoleucine zipper). Interacts with MAP2K1. Interacts with PPP2CA; this interaction targets PPP2CA to the lysosomes. Interacts with TLR4. Interacts with MAVS. Interacts with TBK1.

It is found in the cell membrane. It localises to the golgi apparatus membrane. The protein localises to the lysosome membrane. Its subcellular location is the mitochondrion outer membrane. Its function is as follows. Adapter protein that plays essential roles in both innate and adaptive immunity. Plays a crucial role in the regulation of thymocyte development. Mechanistically, mediates TCR-stimulated activation through recruiting MAP2K1/MEK1 to the Golgi and, thereby, facilitating the interaction of MAP2K1/MEK1 with its activator BRAF. Also plays an essential role in regulatory T-cell stability and function by recruiting the serine-threonine phosphatase catalytic subunit (PPP2CA) to the lysosome, thereby facilitating the interaction of PP2Ac with the mTORC1 component RPTOR and restricting glycolytic metabolism. Positively regulates TLR4 signaling activity in macrophage-mediated inflammation by acting as a molecular clamp to facilitate LPS-induced translocation of TLR4 to lipid rafts. In response to viral infection, facilitates the recruitment of TRAF3 to MAVS within mitochondria leading to IRF3 activation and interferon production. However, participates in the maintenance of immune homeostasis and the prevention of overzealous innate immunity by promoting 'Lys-48'-dependent ubiquitination of TBK1. The polypeptide is TRAF3-interacting JNK-activating modulator (TRAF3IP3) (Homo sapiens (Human)).